The sequence spans 345 residues: OVARIAN TUMOR DOMAIN-containing deubiquitinating enzyme 9 (345 aa).

Residues 204–328 form the OTU domain; the sequence is LVENKIEGDG…EVHYNSIYPE (125 aa). Asp212 is a catalytic residue. The Nucleophile role is filled by Cys215. His321 is an active-site residue.

This sequence belongs to the peptidase C85 family.

The catalysed reaction is Thiol-dependent hydrolysis of ester, thioester, amide, peptide and isopeptide bonds formed by the C-terminal Gly of ubiquitin (a 76-residue protein attached to proteins as an intracellular targeting signal).. Hydrolase that can remove conjugated ubiquitin from proteins in vitro and may therefore play an important regulatory role at the level of protein turnover by preventing degradation. Cysteine protease with a preference for 'Lys-63' and 'Lys-48' -linked ubiquitin (UB) tetramers as substrates. Also cleaves RUB-GST fusion. The chain is OVARIAN TUMOR DOMAIN-containing deubiquitinating enzyme 9 from Arabidopsis thaliana (Mouse-ear cress).